We begin with the raw amino-acid sequence, 480 residues long: Proline--tRNA ligase (480 aa).

The protein belongs to the class-II aminoacyl-tRNA synthetase family. ProS type 3 subfamily. Homodimer.

It localises to the cytoplasm. The enzyme catalyses tRNA(Pro) + L-proline + ATP = L-prolyl-tRNA(Pro) + AMP + diphosphate. In terms of biological role, catalyzes the attachment of proline to tRNA(Pro) in a two-step reaction: proline is first activated by ATP to form Pro-AMP and then transferred to the acceptor end of tRNA(Pro). The polypeptide is Proline--tRNA ligase (Pyrococcus abyssi (strain GE5 / Orsay)).